Reading from the N-terminus, the 110-residue chain is Chelonianin (110 aa).

The residue at position 1 (Q1) is a Pyrrolidone carboxylic acid. A BPTI/Kunitz inhibitor domain is found at 8–58 (CRLPPEQGPCKGRIPRYFYNPASRMCESFIYGGCKGNKNNFKTKAECVRAC). 7 disulfide bridges follow: C8–C58, C17–C41, C33–C54, C67–C92, C76–C97, C80–C93, and C86–C101. Residues 60–105 (PPERPGVCPKTSGPGICLHGCDSDSDCKEGQKCCFDGCGYICLTVA) form the WAP domain.

In terms of biological role, the first domain inhibits trypsin; the second one inhibitis subtilisin. This Caretta caretta (Loggerhead sea turtle) protein is Chelonianin.